A 215-amino-acid chain; its full sequence is NADH-quinone oxidoreductase subunit C (215 aa).

The protein belongs to the complex I 30 kDa subunit family. As to quaternary structure, NDH-1 is composed of 14 different subunits. Subunits NuoB, C, D, E, F, and G constitute the peripheral sector of the complex.

It localises to the cell inner membrane. It catalyses the reaction a quinone + NADH + 5 H(+)(in) = a quinol + NAD(+) + 4 H(+)(out). NDH-1 shuttles electrons from NADH, via FMN and iron-sulfur (Fe-S) centers, to quinones in the respiratory chain. The immediate electron acceptor for the enzyme in this species is believed to be ubiquinone. Couples the redox reaction to proton translocation (for every two electrons transferred, four hydrogen ions are translocated across the cytoplasmic membrane), and thus conserves the redox energy in a proton gradient. This Francisella philomiragia subsp. philomiragia (strain ATCC 25017 / CCUG 19701 / FSC 153 / O#319-036) protein is NADH-quinone oxidoreductase subunit C.